Reading from the N-terminus, the 173-residue chain is Large ribosomal subunit protein uL22c (173 aa).

It belongs to the universal ribosomal protein uL22 family. Part of the 50S ribosomal subunit.

It is found in the plastid. The protein localises to the chloroplast. Functionally, this protein binds specifically to 23S rRNA. The globular domain of the protein is located near the polypeptide exit tunnel on the outside of the subunit, while an extended beta-hairpin is found that lines the wall of the exit tunnel in the center of the 70S ribosome. The chain is Large ribosomal subunit protein uL22c (rpl22) from Drimys granadensis.